A 338-amino-acid chain; its full sequence is Biotin synthase (338 aa).

A Radical SAM core domain is found at 46 to 270; that stretch reads NEVQLSTLLS…VAVARITMPA (225 aa). The [4Fe-4S] cluster site is built by C61, C65, and C68. Residues C105, C136, C196, and R274 each coordinate [2Fe-2S] cluster.

Belongs to the radical SAM superfamily. Biotin synthase family. Homodimer. It depends on [4Fe-4S] cluster as a cofactor. Requires [2Fe-2S] cluster as cofactor.

It catalyses the reaction (4R,5S)-dethiobiotin + (sulfur carrier)-SH + 2 reduced [2Fe-2S]-[ferredoxin] + 2 S-adenosyl-L-methionine = (sulfur carrier)-H + biotin + 2 5'-deoxyadenosine + 2 L-methionine + 2 oxidized [2Fe-2S]-[ferredoxin]. It participates in cofactor biosynthesis; biotin biosynthesis; biotin from 7,8-diaminononanoate: step 2/2. Catalyzes the conversion of dethiobiotin (DTB) to biotin by the insertion of a sulfur atom into dethiobiotin via a radical-based mechanism. This chain is Biotin synthase, found in Rhizorhabdus wittichii (strain DSM 6014 / CCUG 31198 / JCM 15750 / NBRC 105917 / EY 4224 / RW1) (Sphingomonas wittichii).